A 421-amino-acid chain; its full sequence is Methionine aminopeptidase 2 (421 aa).

The disordered stretch occupies residues 1–53 (MTDAEIENSPASDLKELNLENEGVEQQDQAKADESDPVESKKKKNKKKKKKKS). Basic and acidic residues predominate over residues 28–40 (DQAKADESDPVES). The residue at position 35 (Ser35) is a Phosphoserine. The segment covering 41–53 (KKKKNKKKKKKKS) has biased composition (basic residues). Position 174 (His174) interacts with substrate. A divalent metal cation contacts are provided by Asp194, Asp205, and His274. Residue His282 participates in substrate binding. 2 residues coordinate a divalent metal cation: Glu307 and Glu402.

The protein belongs to the peptidase M24A family. Methionine aminopeptidase eukaryotic type 2 subfamily. It depends on Co(2+) as a cofactor. Requires Zn(2+) as cofactor. Mn(2+) is required as a cofactor. The cofactor is Fe(2+).

Its subcellular location is the cytoplasm. The catalysed reaction is Release of N-terminal amino acids, preferentially methionine, from peptides and arylamides.. Cotranslationally removes the N-terminal methionine from nascent proteins. The N-terminal methionine is often cleaved when the second residue in the primary sequence is small and uncharged (Met-Ala-, Cys, Gly, Pro, Ser, Thr, or Val). The chain is Methionine aminopeptidase 2 from Saccharomyces cerevisiae (strain RM11-1a) (Baker's yeast).